The following is a 151-amino-acid chain: Prefoldin subunit alpha (151 aa).

The protein belongs to the prefoldin subunit alpha family. As to quaternary structure, heterohexamer of two alpha and four beta subunits.

It localises to the cytoplasm. In terms of biological role, molecular chaperone capable of stabilizing a range of proteins. Seems to fulfill an ATP-independent, HSP70-like function in archaeal de novo protein folding. The chain is Prefoldin subunit alpha from Sulfurisphaera tokodaii (strain DSM 16993 / JCM 10545 / NBRC 100140 / 7) (Sulfolobus tokodaii).